Reading from the N-terminus, the 460-residue chain is A-type ATP synthase subunit B (460 aa).

The protein belongs to the ATPase alpha/beta chains family. In terms of assembly, has multiple subunits with at least A(3), B(3), C, D, E, F, H, I and proteolipid K(x).

The protein localises to the cell membrane. In terms of biological role, component of the A-type ATP synthase that produces ATP from ADP in the presence of a proton gradient across the membrane. The B chain is a regulatory subunit. The chain is A-type ATP synthase subunit B from Methanosarcina barkeri (strain Fusaro / DSM 804).